The primary structure comprises 484 residues: Myosin-binding protein H (484 aa).

Residues 1 to 78 are disordered; it reads MTGKATPEAS…KPEAPSEDVP (78 aa). Phosphothreonine is present on residues T2, T6, and T26. The segment covering 41 to 71 has biased composition (low complexity); the sequence is QEQAPEPQKQPQAQDPAAHEAPATPATTKPE. The Fibronectin type-III 1 domain occupies 80-175; sequence APLQLTLEDV…LDQPVHIQEI (96 aa). Residues 179-267 enclose the Ig-like C2-type 1 domain; it reads PKIRVPRHLR…EGLEAKAAID (89 aa). The region spanning 276–371 is the Fibronectin type-III 2 domain; it reads PPSSIKLLDV…TKELAHIHKA (96 aa). The Ig-like C2-type 2 domain maps to 389 to 479; the sequence is PSFTQPVADR…PAVDCRLEVK (91 aa).

It belongs to the immunoglobulin superfamily. MyBP family. Skeletal muscle.

Binds to myosin; probably involved in interaction with thick myofilaments in the A-band. In Rattus norvegicus (Rat), this protein is Myosin-binding protein H (Mybph).